Reading from the N-terminus, the 805-residue chain is Leucine--tRNA ligase (805 aa).

A 'HIGH' region motif is present at residues 40-51 (PYPSGAGLHVGH). The short motif at 576-580 (KMSKS) is the 'KMSKS' region element. Lys-579 serves as a coordination point for ATP.

This sequence belongs to the class-I aminoacyl-tRNA synthetase family.

The protein resides in the cytoplasm. The enzyme catalyses tRNA(Leu) + L-leucine + ATP = L-leucyl-tRNA(Leu) + AMP + diphosphate. This Geobacillus thermodenitrificans (strain NG80-2) protein is Leucine--tRNA ligase.